Here is a 298-residue protein sequence, read N- to C-terminus: Zinc finger protein-like 1 homolog (298 aa).

The B box-type; degenerate zinc finger occupies 1 to 43 (MGLCKCPKRLVTNQFCFEHRVNVCEHCMVQSHPKCIVQSYLQW). An RING-type; atypical zinc finger spans residues 53–101 (CTLCGTTLEQGDCVRLVCYHVFHWDCLNARQAALPANTAPRGHQCPACT). The segment at 199 to 230 (AGDYASSRRPLLPRQSPIGGTDRDDNKYQRRT) is disordered. At S214 the chain carries Phosphoserine. Residues 255–275 (WFLVTAGILAFVLFVYLMAWL) form a helical membrane-spanning segment.

Belongs to the ZFPL1 family.

It is found in the membrane. This is Zinc finger protein-like 1 homolog from Drosophila erecta (Fruit fly).